Consider the following 142-residue polypeptide: MRSPGEVLREGELEKRSDSLLQVWKKKRGVLTTDRLRLFPTGPGARPKELRFHSILKVDCVERTGKYVYFTIVTTDRKEIDFRCAGESYWNASITLALIDFQNRRAMQDFRSRRERAAAAAAAAAAAAAAEQEPEAGPGGQP.

Ser3 is modified (phosphoserine). The PH domain maps to Val7–Ile99.

Belongs to the PHLDA2 family.

The protein resides in the cytoplasm. It is found in the membrane. Plays a role in regulating placenta growth. May act via its PH domain that competes with other PH domain-containing proteins, thereby preventing their binding to membrane lipids. This chain is Pleckstrin homology-like domain family A member 2 (PHLDA2), found in Bos taurus (Bovine).